The following is a 431-amino-acid chain: Tol-Pal system protein TolB (431 aa).

The N-terminal stretch at 1–26 is a signal peptide; sequence MSLMTKLGFRALVASCLITAGSAANA. The disordered stretch occupies residues 406–431; that stretch reads DGSAPPQILSVQGGSVREPSWGPFMQ.

This sequence belongs to the TolB family. In terms of assembly, the Tol-Pal system is composed of five core proteins: the inner membrane proteins TolA, TolQ and TolR, the periplasmic protein TolB and the outer membrane protein Pal. They form a network linking the inner and outer membranes and the peptidoglycan layer.

The protein resides in the periplasm. Its function is as follows. Part of the Tol-Pal system, which plays a role in outer membrane invagination during cell division and is important for maintaining outer membrane integrity. The chain is Tol-Pal system protein TolB from Burkholderia orbicola (strain AU 1054).